A 420-amino-acid chain; its full sequence is Glucose-1-phosphate adenylyltransferase (420 aa).

Alpha-D-glucose 1-phosphate contacts are provided by residues Tyr97, Gly162, 177 to 178, and Ser188; that span reads EK.

The protein belongs to the bacterial/plant glucose-1-phosphate adenylyltransferase family. In terms of assembly, homotetramer.

The enzyme catalyses alpha-D-glucose 1-phosphate + ATP + H(+) = ADP-alpha-D-glucose + diphosphate. The protein operates within glycan biosynthesis; glycogen biosynthesis. Involved in the biosynthesis of ADP-glucose, a building block required for the elongation reactions to produce glycogen. Catalyzes the reaction between ATP and alpha-D-glucose 1-phosphate (G1P) to produce pyrophosphate and ADP-Glc. This chain is Glucose-1-phosphate adenylyltransferase, found in Pseudothermotoga lettingae (strain ATCC BAA-301 / DSM 14385 / NBRC 107922 / TMO) (Thermotoga lettingae).